The primary structure comprises 514 residues: Phospholipase C D (514 aa).

The tat-type signal signal peptide spans 1-37 (MSQSHIGGVSRREFLAKVAAGGAGALMSFAGPVIEKA). Residues 492–514 (VPDPQIMPTQETTPTRGIPSGPC) are disordered.

This sequence belongs to the bacterial phospholipase C family. Predicted to be exported by the Tat system. The position of the signal peptide cleavage has not been experimentally proven.

It localises to the secreted. The protein localises to the cell wall. It carries out the reaction a 1,2-diacyl-sn-glycero-3-phosphocholine + H2O = phosphocholine + a 1,2-diacyl-sn-glycerol + H(+). Its function is as follows. Involved in virulence. Induces cytotoxic effects on mouse macrophage cell lines, via direct or indirect enzymatic hydrolysis of cell membrane phospholipids. Hydrolyzes phosphatidylcholine. In Mycobacterium tuberculosis (strain CDC 1551 / Oshkosh), this protein is Phospholipase C D.